Consider the following 351-residue polypeptide: Biotin synthase (351 aa).

In terms of domain architecture, Radical SAM core spans 44-262; sequence NRVQVSTLLS…LAVARIMMPK (219 aa). [4Fe-4S] cluster-binding residues include Cys59, Cys63, and Cys66. Positions 103, 134, 194, and 266 each coordinate [2Fe-2S] cluster.

It belongs to the radical SAM superfamily. Biotin synthase family. In terms of assembly, homodimer. The cofactor is [4Fe-4S] cluster. It depends on [2Fe-2S] cluster as a cofactor.

The enzyme catalyses (4R,5S)-dethiobiotin + (sulfur carrier)-SH + 2 reduced [2Fe-2S]-[ferredoxin] + 2 S-adenosyl-L-methionine = (sulfur carrier)-H + biotin + 2 5'-deoxyadenosine + 2 L-methionine + 2 oxidized [2Fe-2S]-[ferredoxin]. It functions in the pathway cofactor biosynthesis; biotin biosynthesis; biotin from 7,8-diaminononanoate: step 2/2. Its function is as follows. Catalyzes the conversion of dethiobiotin (DTB) to biotin by the insertion of a sulfur atom into dethiobiotin via a radical-based mechanism. This chain is Biotin synthase, found in Stutzerimonas stutzeri (strain A1501) (Pseudomonas stutzeri).